The following is a 374-amino-acid chain: MAALTDADCLVVKIGSALLVDRDAGGLRQAWLASLAQDVAWLTRQGVKVVLVSSGSIALGRGILKLSDTDLPLEQAQAAAAVGQIRLARAYEEVLAPHGITTGQVLMTLDDSSNRRRYLNSRATLKQLLSMGVVPIVNENDTIATDEIRFGDNDRLAAQIAVTVGADQLVLLSDVDGFYSANPNIDPTAQRFDEIGEITPEIEDMAGDACSGLSKGGMKTKLMAAKIATAAGCRMAITEGVVLNPLRALNEGAAATWFRADTDPQAARKGWIAAMKPKGTVHLDSGALAALRSGKSLLPAGVSHITGHFQRGDPVAIADGAGHTVGHGLVRYTAEEAGRIMGRKSNEIESVLGYPARAALIHRDDMALTIQNGD.

K13 contributes to the ATP binding site. 3 residues coordinate substrate: S54, D141, and N153. Position 173-174 (173-174 (SD)) interacts with ATP. The PUA domain maps to 278–355 (KGTVHLDSGA…NEIESVLGYP (78 aa)).

It belongs to the glutamate 5-kinase family.

Its subcellular location is the cytoplasm. It catalyses the reaction L-glutamate + ATP = L-glutamyl 5-phosphate + ADP. Its pathway is amino-acid biosynthesis; L-proline biosynthesis; L-glutamate 5-semialdehyde from L-glutamate: step 1/2. Catalyzes the transfer of a phosphate group to glutamate to form L-glutamate 5-phosphate. This Roseobacter denitrificans (strain ATCC 33942 / OCh 114) (Erythrobacter sp. (strain OCh 114)) protein is Glutamate 5-kinase.